Consider the following 86-residue polypeptide: RNA-binding protein Hfq (86 aa).

Residues 9-68 (DIFLNVLRRERIQVSIYLFNGIKLQGHIESFDQFVIVLKNTISQMVYKHAVSTIVPSKFV) enclose the Sm domain.

It belongs to the Hfq family. Homohexamer.

In terms of biological role, RNA chaperone that binds small regulatory RNA (sRNAs) and mRNAs to facilitate mRNA translational regulation in response to envelope stress, environmental stress and changes in metabolite concentrations. Also binds with high specificity to tRNAs. The sequence is that of RNA-binding protein Hfq from Baumannia cicadellinicola subsp. Homalodisca coagulata.